The primary structure comprises 463 residues: MSDQSKQKELLWQSRFSEPFDREALQFSSSVHVDGLLYREDIQGSIAHATMLGEEGIISAGESEQIVEGLKAVEKEIESGELVPVWEDEDIHTVIENRLKELIGPAAGKLHSGRSRNDQVATDTRLYLRRNIDRLVGLLEAMQSTLLDKAERYKSTIMFGYTHLQRAQPMSAGHYYMAWHSMFGRDAERLADLRKRANISPLGAAAFAGSTLPLNPARSAELLEFDGVFANSIDAVSDRDLVIEFVSACSMIMMHLSRFSEDVILWTSAEFNYLSISDAFATGSSIMPQKKNADIAELVRGKTGRVYGNLMNLLTIMKGLPLSYNRDMQEDKPPLFDTAETTASSLSVFRRMIEKTWLNEERLAKLTAEDLSLATEIAEYLVKKQIPFRDAHRITGKIVAYAIEKSKTLPTISLDEYRTFSESFDEGIYDDLKPDASVNSKKTAGSCSFKSVEEQIARARKNS.

It belongs to the lyase 1 family. Argininosuccinate lyase subfamily.

Its subcellular location is the cytoplasm. It catalyses the reaction 2-(N(omega)-L-arginino)succinate = fumarate + L-arginine. It participates in amino-acid biosynthesis; L-arginine biosynthesis; L-arginine from L-ornithine and carbamoyl phosphate: step 3/3. The sequence is that of Argininosuccinate lyase from Chlorobaculum parvum (strain DSM 263 / NCIMB 8327) (Chlorobium vibrioforme subsp. thiosulfatophilum).